Here is a 271-residue protein sequence, read N- to C-terminus: ATP synthase subunit a (271 aa).

Helical transmembrane passes span 31 to 51, 89 to 109, 124 to 144, 186 to 206, and 216 to 236; these read WDTI…GLYM, FVAP…WIGV, DINL…IVSL, IFSG…VLWL, and LGVG…YYAF. The tract at residues 247–271 is disordered; sequence DEHADGGDSSSRQASPTPLPAGQVR.

It belongs to the ATPase A chain family. As to quaternary structure, F-type ATPases have 2 components, CF(1) - the catalytic core - and CF(0) - the membrane proton channel. CF(1) has five subunits: alpha(3), beta(3), gamma(1), delta(1), epsilon(1). CF(0) has three main subunits: a(1), b(2) and c(9-12). The alpha and beta chains form an alternating ring which encloses part of the gamma chain. CF(1) is attached to CF(0) by a central stalk formed by the gamma and epsilon chains, while a peripheral stalk is formed by the delta and b chains.

The protein localises to the cell membrane. Functionally, key component of the proton channel; it plays a direct role in the translocation of protons across the membrane. This Acidothermus cellulolyticus (strain ATCC 43068 / DSM 8971 / 11B) protein is ATP synthase subunit a.